Consider the following 387-residue polypeptide: Protein salvador homolog 1 (387 aa).

2 positions are modified to phosphoserine: S95 and S138. WW domains follow at residues 201–234 (LPLP…HPLE) and 236–269 (EGLP…HPCA). The residue at position 212 (T212) is a Phosphothreonine. Positions 323 to 370 (ILKWELFQLADLDTYQGMLKLLFMKELEQIVKLYEAYRQALVTELENR) constitute an SARAH domain.

As to quaternary structure, homodimer. Stabilized through interaction with STK3/MST2 or STK4/MST1. Interacts (via SARAH domain) with isoform 1 of NEK2. Interacts with ESR1 only in the presence of STK3/MST2. Interacts with WTIP and AJUBA. Post-translationally, phosphorylated by STK3/MST2 and STK4/MST1. Phosphorylation is not required for SAV1 stability and may increase the number of protein binding sites on the scaffold molecule.

The protein resides in the nucleus. The protein localises to the cytoplasm. Functionally, regulator of STK3/MST2 and STK4/MST1 in the Hippo signaling pathway which plays a pivotal role in organ size control and tumor suppression by restricting proliferation and promoting apoptosis. The core of this pathway is composed of a kinase cascade wherein STK3/MST2 and STK4/MST1, in complex with its regulatory protein SAV1, phosphorylates and activates LATS1/2 in complex with its regulatory protein MOB1, which in turn phosphorylates and inactivates YAP1 oncoprotein and WWTR1/TAZ. Phosphorylation of YAP1 by LATS1/2 inhibits its translocation into the nucleus to regulate cellular genes important for cell proliferation, cell death, and cell migration. SAV1 is required for STK3/MST2 and STK4/MST1 activation and promotes cell-cycle exit and terminal differentiation in developing epithelial tissues. Plays a role in centrosome disjunction by regulating the localization of NEK2 to centrosomes, and its ability to phosphorylate CROCC and CEP250. In conjunction with STK3/MST2, activates the transcriptional activity of ESR1 through the modulation of its phosphorylation. The protein is Protein salvador homolog 1 of Rattus norvegicus (Rat).